Consider the following 173-residue polypeptide: Photosystem I assembly protein Ycf3 (173 aa).

3 TPR repeats span residues 35-68 (AYIY…EENK), 72-105 (GETL…NPKQ), and 120-153 (GRNA…YPGG).

This sequence belongs to the Ycf3 family.

The protein resides in the cellular thylakoid membrane. Functionally, essential for the assembly of the photosystem I (PSI) complex. May act as a chaperone-like factor to guide the assembly of the PSI subunits. The protein is Photosystem I assembly protein Ycf3 of Prochlorococcus marinus (strain MIT 9301).